A 209-amino-acid chain; its full sequence is Thymidylate kinase (209 aa).

Residue 10–17 (GIDGCGKS) participates in ATP binding.

It belongs to the thymidylate kinase family.

It catalyses the reaction dTMP + ATP = dTDP + ADP. Phosphorylation of dTMP to form dTDP in both de novo and salvage pathways of dTTP synthesis. This is Thymidylate kinase from Parasynechococcus marenigrum (strain WH8102).